Reading from the N-terminus, the 885-residue chain is 3-hydroxy-3-methylglutaryl-coenzyme A reductase (885 aa).

Residues Met-1–His-9 lie on the Cytoplasmic side of the membrane. The helical transmembrane segment at Gly-10–Gly-39 threads the bilayer. At Asn-40–Asp-56 the chain is on the lumenal side. Residues Val-57 to Phe-78 traverse the membrane as a helical segment. The region spanning Asp-61 to Leu-218 is the SSD domain. The INSIG-binding motif signature appears at Tyr-75–Phe-78. At Gln-79 to Lys-89 the chain is on the cytoplasmic side. Residue Lys-89 forms a Glycyl lysine isopeptide (Lys-Gly) (interchain with G-Cter in ubiquitin) linkage. Residues Tyr-90–Leu-114 traverse the membrane as a helical segment. Topologically, residues Asp-115–Glu-123 are lumenal. The chain crosses the membrane as a helical span at residues Ala-124–Ser-149. The Cytoplasmic portion of the chain corresponds to Gln-150–Arg-159. The chain crosses the membrane as a helical span at residues Gly-160–Val-187. Over Arg-188 to Glu-191 the chain is Lumenal. Residues Ile-192 to Leu-220 traverse the membrane as a helical segment. Topologically, residues Glu-221 to Lys-248 are cytoplasmic. Lys-248 is covalently cross-linked (Glycyl lysine isopeptide (Lys-Gly) (interchain with G-Cter in ubiquitin)). A helical membrane pass occupies residues Pro-249–Ala-275. The Lumenal portion of the chain corresponds to Asp-276 to Lys-314. 2 N-linked (GlcNAc...) asparagine glycosylation sites follow: Asn-281 and Asn-296. A helical membrane pass occupies residues Met-315 to Phe-339. Residues Glu-340–Ala-885 lie on the Cytoplasmic side of the membrane. Residues Glu-558, Lys-688, and Asp-764 each act as charge relay system in the active site. The active-site Proton donor is His-863. Residue Ser-869 is modified to Phosphoserine; by AMPK.

This sequence belongs to the HMG-CoA reductase family. In terms of assembly, homotetramer. Homodimer. Interacts (via its SSD) with INSIG1; the interaction, accelerated by sterols, leads to the recruitment of HMGCR to AMFR/gp78 for its ubiquitination by the sterol-mediated ERAD pathway. Interacts with UBIAD1. In terms of processing, undergoes sterol-mediated ubiquitination and ER-associated degradation (ERAD). Accumulation of sterols in the endoplasmic reticulum (ER) membrane, triggers binding of the reductase to the ER membrane protein INSIG1 or INSIG2. The INSIG1 binding leads to the recruitment of the ubiquitin ligase, AMFR/gp78, RNF139 or RNF145, initiating ubiquitination of the reductase. The ubiquitinated reductase is then extracted from the ER membrane and delivered to cytosolic 26S proteosomes by a mechanism probably mediated by the ATPase Valosin-containing protein VCP/p97. The INSIG2-binding leads to the recruitment of the ubiquitin ligase RNF139, initiating ubiquitination of the reductase. Lys-248 is the main site of ubiquitination. Ubiquitination is enhanced by the presence of a geranylgeranylated protein. N-glycosylated. Deglycosylated by NGLY1 on release from the endoplasmic reticulum (ER) in a sterol-mediated manner. Post-translationally, phosphorylated. Phosphorylation at Ser-869 reduces the catalytic activity. High expression found in liver, heart, kidney, bladder and subcutaneous fat. Lower levels in lung, uterus and large intestine. Lowest levels in cerebrum, spleen, spinal cord, stomach, ovary, longissimus muscle, and small intestine.

The protein resides in the endoplasmic reticulum membrane. It localises to the peroxisome membrane. The enzyme catalyses (R)-mevalonate + 2 NADP(+) + CoA = (3S)-3-hydroxy-3-methylglutaryl-CoA + 2 NADPH + 2 H(+). It functions in the pathway metabolic intermediate biosynthesis; (R)-mevalonate biosynthesis; (R)-mevalonate from acetyl-CoA: step 3/3. Its activity is regulated as follows. Regulated by a negative feedback mechanism through sterols and non-sterol metabolites derived from mevalonate. Phosphorylation at Ser-869 down-regulates the catalytic activity. Functionally, catalyzes the conversion of (3S)-hydroxy-3-methylglutaryl-CoA (HMG-CoA) to mevalonic acid, the rate-limiting step in the synthesis of cholesterol and other isoprenoids, thus plays a critical role in cellular cholesterol homeostasis. This Sus scrofa (Pig) protein is 3-hydroxy-3-methylglutaryl-coenzyme A reductase (HMGCR).